The chain runs to 232 residues: Ornithine carbamoyltransferase (232 aa).

Carbamoyl phosphate is bound by residues Q15, R39, and 66 to 69 (HPTQ). L-ornithine contacts are provided by residues N99, D163, and 167-168 (SM). Carbamoyl phosphate is bound by residues 204–207 (HCLP) and T232.

Belongs to the aspartate/ornithine carbamoyltransferase superfamily. OTCase family.

The protein localises to the cytoplasm. It catalyses the reaction carbamoyl phosphate + L-ornithine = L-citrulline + phosphate + H(+). Its pathway is amino-acid biosynthesis; L-arginine biosynthesis; L-arginine from L-ornithine and carbamoyl phosphate: step 1/3. Functionally, reversibly catalyzes the transfer of the carbamoyl group from carbamoyl phosphate (CP) to the N(epsilon) atom of ornithine (ORN) to produce L-citrulline. This chain is Ornithine carbamoyltransferase (argF), found in Neisseria subflava.